The sequence spans 835 residues: Phenylalanine--tRNA ligase beta subunit (835 aa).

The tRNA-binding domain maps to 44 to 158; that stretch reads GPVDGPLTVG…LPGADGADVL (115 aa). The 80-residue stretch at 414 to 493 folds into the B5 domain; the sequence is WSLPPIRIAV…RLEGLEVIRS (80 aa). Residues Asp-471, Asp-477, Glu-480, and Glu-481 each coordinate Mg(2+). Positions 741–834 constitute an FDX-ACB domain; sequence SPFPAVLQDV…AAERVGATLR (94 aa).

It belongs to the phenylalanyl-tRNA synthetase beta subunit family. Type 1 subfamily. As to quaternary structure, tetramer of two alpha and two beta subunits. Mg(2+) serves as cofactor.

The protein localises to the cytoplasm. It carries out the reaction tRNA(Phe) + L-phenylalanine + ATP = L-phenylalanyl-tRNA(Phe) + AMP + diphosphate + H(+). The polypeptide is Phenylalanine--tRNA ligase beta subunit (Mycobacterium leprae (strain TN)).